We begin with the raw amino-acid sequence, 2281 residues long: Protein Ycf2 (2281 aa).

An ATP-binding site is contributed by 1634-1641 (GSIGTGRS).

This sequence belongs to the Ycf2 family.

It localises to the plastid. It is found in the chloroplast stroma. Probable ATPase of unknown function. Its presence in a non-photosynthetic plant (Epifagus virginiana) and experiments in tobacco indicate that it has an essential function which is probably not related to photosynthesis. The protein is Protein Ycf2 of Buxus microphylla (Littleleaf boxwood).